A 455-amino-acid polypeptide reads, in one-letter code: Glycylpeptide N-tetradecanoyltransferase (455 aa).

38-41 (HKFW) contacts tetradecanoyl-CoA. The myristoyl CoA-binding stretch occupies residues 168–204 (INFLCVHKQLRSKRLTPVLIKEITRRVNKCDIWHALY). Catalysis depends on L455, which acts as the Proton acceptor; via carboxylate.

It belongs to the NMT family. As to quaternary structure, monomer. Post-translationally, the N-terminus is blocked.

It is found in the cytoplasm. It carries out the reaction N-terminal glycyl-[protein] + tetradecanoyl-CoA = N-tetradecanoylglycyl-[protein] + CoA + H(+). Its activity is regulated as follows. Inhibited by diethylpyrocarbonate. Competitively inhibited by S-(2-oxo)pentadecyl-CoA, a non hydrolysable myristoyl-CoA analog, and by SC-58272, a peptidomimetic derived from the N-terminal sequence of a natural substrate. Adds a myristoyl group to the N-terminal glycine residue of certain cellular proteins. Substrate specificity requires an N-terminal glycine in the nascent polypeptide substrates. Uncharged amino acids are preferred at position 2 while neutral residues are favored at positions 3 and 4. Ser is present at position 5 in almost all known N-myristoyl proteins and Lys is commonly encountered at postion 6. The chain is Glycylpeptide N-tetradecanoyltransferase (NMT1) from Saccharomyces cerevisiae (strain ATCC 204508 / S288c) (Baker's yeast).